The sequence spans 261 residues: MKFGMGSAQACPCQVPRAASTTWVPCQICGPRERHGPRTPGGQLPGARRGPGPRRPAPLPARPPGALGSVLRPLRARPGCRPRRPHPAARCLPLRPHRPTRRHRRPGGFPLAWGSPQPAPRPAPGRSSALALAGGAAPGVARAQRPGGSGGRSHPGGPGSPRGGGTVGPGDRGPAAADGGRPQRTVRAAETRGAAAAPPLTLEGPVQSHHGTPALTQGPQSPRDGAQLGACTRPVDVRDSGGRPLPPPDTLASAGDFLCTM.

The disordered stretch occupies residues 27–261 (QICGPRERHG…ASAGDFLCTM (235 aa)). Over residues 40–50 (PGGQLPGARRG) the composition is skewed to low complexity. Residues 53–63 (PRRPAPLPARP) are compositionally biased toward pro residues. Over residues 64-73 (PGALGSVLRP) the composition is skewed to low complexity. Basic residues-rich tracts occupy residues 74–87 (LRAR…RPHP) and 95–106 (RPHRPTRRHRRP). A compositionally biased stretch (low complexity) spans 124–146 (PGRSSALALAGGAAPGVARAQRP). A compositionally biased stretch (gly residues) spans 147 to 171 (GGSGGRSHPGGPGSPRGGGTVGPGD). Residues 172–197 (RGPAAADGGRPQRTVRAAETRGAAAA) are compositionally biased toward low complexity.

As to quaternary structure, does not interact with BCL2.

Its function is as follows. Does not affect cell growth. This is Bcl-2-binding component 3, isoforms 3/4 (BBC3) from Homo sapiens (Human).